The chain runs to 1495 residues: ABC transporter C family member 12 (1495 aa).

The next 11 helical transmembrane spans lie at 38–58 (VMLVSHFVLLGLCFYRIWIIF), 76–96 (VLGLLACYCVVEPVLRLVMGI), 110–130 (FEVASLMVEAFAWFSMLVLIG), 146–166 (FGVLYVLVADAVLLDLVLPLK), 173–195 (ALYLFISSRCSQALFGILLLIYI), 303–323 (FWLAGIFKIGNDLSQFVGPVI), 337–357 (AWVGYVYAFIIFVGVTLGVLC), 420–440 (GLWSAPFRIIVSMILLYQQLG), 441–461 (VASLFGSLILFLLIPLQTLII), 528–548 (FILNSIPVVVTVVSFGVFVLL), and 558–578 (FTSLSLFAVLRFPLNMLPNLL). The region spanning 303–583 (FWLAGIFKIG…LPNLLSQVVN (281 aa)) is the ABC transmembrane type-1 1 domain. Positions 615–839 (ISIKNGYFSW…GILFKKLMEN (225 aa)) constitute an ABC transporter 1 domain. 650-657 (GGTGEGKT) lines the ATP pocket. Transmembrane regions (helical) follow at residues 907 to 927 (AVGGLWVVMILLACYLATEVL), 949 to 969 (PGFYIVVYALLGFGQVAVTFT), 1042 to 1062 (FALIGTVSTISLWAIMPLLIL), 1140 to 1160 (LETLGGVMIWLTATFAVLQNG), and 1166 to 1186 (AGFASTMGLLLSYTLNITSLL). The region spanning 914–1198 (VMILLACYLA…VLRQASRAEN (285 aa)) is the ABC transmembrane type-1 2 domain. One can recognise an ABC transporter 2 domain in the interval 1235-1469 (IKFEDVHLRY…DTSAFFRMVH (235 aa)). 1269–1276 (GRTGAGKS) lines the ATP pocket.

This sequence belongs to the ABC transporter superfamily. ABCC family. Conjugate transporter (TC 3.A.1.208) subfamily. In terms of tissue distribution, ubiquitous.

It localises to the membrane. The enzyme catalyses ATP + H2O + xenobioticSide 1 = ADP + phosphate + xenobioticSide 2.. Pump for glutathione S-conjugates. The protein is ABC transporter C family member 12 (ABCC12) of Arabidopsis thaliana (Mouse-ear cress).